The following is a 389-amino-acid chain: Naringenin-chalcone synthase (389 aa).

C164 is a catalytic residue.

This sequence belongs to the thiolase-like superfamily. Chalcone/stilbene synthases family. As to expression, expressed in glandular trichomes. Detected at low levels in female flowers, stems, seeds, leaves and roots.

Its subcellular location is the cytoplasm. It catalyses the reaction (E)-4-coumaroyl-CoA + 3 malonyl-CoA + 3 H(+) = 2',4,4',6'-tetrahydroxychalcone + 3 CO2 + 4 CoA. In terms of biological role, chalcone synthase that can also use isovaleryl-CoA, isobutyryl-CoA or hexanoyl-CoA as substrates, but that is unable to produce olivetol or olivetolic acid. This is Naringenin-chalcone synthase (CHS) from Cannabis sativa (Hemp).